A 73-amino-acid chain; its full sequence is Mu-sparatoxin-Hv2 (73 aa).

An N-terminal signal peptide occupies residues 1–20 (MKFAIVITLLLVAFSAVALA). Positions 21–35 (DKSIERAVMDLITAR) are excised as a propeptide. Cystine bridges form between C39–C53, C46–C58, and C52–C68. Phenylalanine amide is present on F72.

This sequence belongs to the neurotoxin 10 (Hwtx-1) family. Expressed by the venom gland.

It is found in the secreted. Functionally, insecticidal toxin that potently and irreversibly blocks voltage-gated sodium channels (Nav) in cockroach dorsal unpaired median (DUM) neurons (IC(50)=833.7 nM). It does not change both the steady-state activation and inactivation curves, suggesting it acts as a pore blocker (possibly at Nav site 1). Does not show toxicity when intraperitoneally injected into mouse. This Heteropoda venatoria (Brown huntsman spider) protein is Mu-sparatoxin-Hv2.